Here is a 217-residue protein sequence, read N- to C-terminus: GTP cyclohydrolase 1 (217 aa).

Residues C109, H112, and C180 each contribute to the Zn(2+) site.

This sequence belongs to the GTP cyclohydrolase I family. In terms of assembly, toroid-shaped homodecamer, composed of two pentamers of five dimers.

The enzyme catalyses GTP + H2O = 7,8-dihydroneopterin 3'-triphosphate + formate + H(+). It functions in the pathway cofactor biosynthesis; 7,8-dihydroneopterin triphosphate biosynthesis; 7,8-dihydroneopterin triphosphate from GTP: step 1/1. The chain is GTP cyclohydrolase 1 from Vibrio campbellii (strain ATCC BAA-1116).